The sequence spans 195 residues: Imidazoleglycerol-phosphate dehydratase (195 aa).

Belongs to the imidazoleglycerol-phosphate dehydratase family.

It localises to the cytoplasm. The catalysed reaction is D-erythro-1-(imidazol-4-yl)glycerol 3-phosphate = 3-(imidazol-4-yl)-2-oxopropyl phosphate + H2O. The protein operates within amino-acid biosynthesis; L-histidine biosynthesis; L-histidine from 5-phospho-alpha-D-ribose 1-diphosphate: step 6/9. The chain is Imidazoleglycerol-phosphate dehydratase from Geobacillus thermodenitrificans (strain NG80-2).